The sequence spans 34 residues: COP9 signalosome complex subunit 5a (34 aa).

This sequence belongs to the peptidase M67A family. CSN5 subfamily. As to quaternary structure, component of the CSN complex, probably composed of CSN1, CSN2, CSN3, CSN4, CSN5 (CSN5A or CSN5B), CSN6 (CSN6A or CSN6B), CSN7 and CSN8. A divalent metal cation is required as a cofactor.

The protein localises to the cytoplasm. Its subcellular location is the nucleus. Probable protease subunit of the COP9 signalosome complex (CSN), a complex involved in various cellular and developmental processes such as photomorphogenesis and auxin and jasmonate responses. The CSN complex is an essential regulator of the ubiquitin (Ubl) conjugation pathway by mediating the deneddylation of the cullin subunits of the SCF-type E3 ligase complexes, leading to decrease the Ubl ligase activity of SCF. In the complex, it probably acts as the catalytic center that mediates the cleavage of Nedd8 from cullins. It however has no metalloprotease activity by itself and requires the other subunits of the CSN complex. The CSN complex is involved in repression of photomorphogenesis in darkness by regulating the activity of COP1-containing Ubl ligase complexes. This chain is COP9 signalosome complex subunit 5a (CSN5A), found in Brassica oleracea (Wild cabbage).